A 171-amino-acid polypeptide reads, in one-letter code: KRAB domain-containing protein 4 (171 aa).

A KRAB domain is found at Leu8–Ala79.

In terms of tissue distribution, expressed in brain, ovary, testis, prostate, tonsil, heart, bone marrow, colon, breast and kidney.

This Homo sapiens (Human) protein is KRAB domain-containing protein 4 (KRBOX4).